A 258-amino-acid chain; its full sequence is Deoxyribose-phosphate aldolase (258 aa).

Aspartate 102 acts as the Proton donor/acceptor in catalysis. The Schiff-base intermediate with acetaldehyde role is filled by lysine 165. Catalysis depends on lysine 199, which acts as the Proton donor/acceptor.

The protein belongs to the DeoC/FbaB aldolase family. DeoC type 2 subfamily.

Its subcellular location is the cytoplasm. The enzyme catalyses 2-deoxy-D-ribose 5-phosphate = D-glyceraldehyde 3-phosphate + acetaldehyde. The protein operates within carbohydrate degradation; 2-deoxy-D-ribose 1-phosphate degradation; D-glyceraldehyde 3-phosphate and acetaldehyde from 2-deoxy-alpha-D-ribose 1-phosphate: step 2/2. In terms of biological role, catalyzes a reversible aldol reaction between acetaldehyde and D-glyceraldehyde 3-phosphate to generate 2-deoxy-D-ribose 5-phosphate. The polypeptide is Deoxyribose-phosphate aldolase (Vibrio parahaemolyticus serotype O3:K6 (strain RIMD 2210633)).